The following is a 268-amino-acid chain: Protein CONTINUOUS VASCULAR RING 1 (268 aa).

The Cytoplasmic segment spans residues 1-70 (MGDEKPVIVM…GWASKKFMTG (70 aa)). A disordered region spans residues 21–48 (IPVADSGDKDDGSSSKPSSSSSASSSSH). Residues 34 to 48 (SSKPSSSSSASSSSH) show a composition bias toward low complexity. A helical transmembrane segment spans residues 71 to 91 (CVILLPIAITFYITWWFIHFV). The Extracellular portion of the chain corresponds to 92–103 (DGFFSPIYAQLG). The chain crosses the membrane as a helical span at residues 104-124 (INVFGFGFLTSIAFIFLVGVF). Topologically, residues 125–268 (MSSWLGASVL…LASIDRATSL (144 aa)) are cytoplasmic.

It belongs to the plant COV1 protein family. Mostly expressed in flowers and stems, and, to a lower extent, in roots and leaves.

Its subcellular location is the membrane. In terms of biological role, involved in the regulation of vascular patterning in the stem, probably by negatively regulating the differentiation of vascular tissue. The polypeptide is Protein CONTINUOUS VASCULAR RING 1 (Arabidopsis thaliana (Mouse-ear cress)).